A 725-amino-acid polypeptide reads, in one-letter code: 1,4-alpha-glucan branching enzyme GlgB (725 aa).

Residue aspartate 403 is the Nucleophile of the active site. Catalysis depends on glutamate 456, which acts as the Proton donor.

Belongs to the glycosyl hydrolase 13 family. GlgB subfamily. Monomer.

It carries out the reaction Transfers a segment of a (1-&gt;4)-alpha-D-glucan chain to a primary hydroxy group in a similar glucan chain.. The protein operates within glycan biosynthesis; glycogen biosynthesis. Functionally, catalyzes the formation of the alpha-1,6-glucosidic linkages in glycogen by scission of a 1,4-alpha-linked oligosaccharide from growing alpha-1,4-glucan chains and the subsequent attachment of the oligosaccharide to the alpha-1,6 position. This chain is 1,4-alpha-glucan branching enzyme GlgB, found in Pectobacterium atrosepticum (strain SCRI 1043 / ATCC BAA-672) (Erwinia carotovora subsp. atroseptica).